Consider the following 287-residue polypeptide: Large ribosomal subunit protein uL2 (287 aa).

The interval arginine 221–serine 287 is disordered. Positions lysine 258–serine 287 are enriched in basic residues.

This sequence belongs to the universal ribosomal protein uL2 family. As to quaternary structure, part of the 50S ribosomal subunit. Forms a bridge to the 30S subunit in the 70S ribosome.

One of the primary rRNA binding proteins. Required for association of the 30S and 50S subunits to form the 70S ribosome, for tRNA binding and peptide bond formation. It has been suggested to have peptidyltransferase activity; this is somewhat controversial. Makes several contacts with the 16S rRNA in the 70S ribosome. The protein is Large ribosomal subunit protein uL2 of Synechococcus sp. (strain WH7803).